The primary structure comprises 27 residues: Omega-conotoxin RVIA (27 aa).

3 disulfides stabilise this stretch: Cys-1–Cys-16, Cys-8–Cys-19, and Cys-15–Cys-26. 4-hydroxyproline is present on residues Pro-4 and Pro-7.

This sequence belongs to the conotoxin O1 superfamily. As to expression, expressed by the venom duct.

It localises to the secreted. In terms of biological role, omega-conotoxins act at presynaptic membranes, they bind and block voltage-gated calcium channels (Cav). In Conus radiatus (Rayed cone), this protein is Omega-conotoxin RVIA.